Consider the following 409-residue polypeptide: Glycogenin (409 aa).

UDP is bound by residues L8, Y14, and R80. 11 residues coordinate UDP-alpha-D-glucose: L8, Y14, R80, K89, D105, D107, N140, S141, D169, D172, and Q173. 2 residues coordinate UDP: D105 and D107. 2 residues coordinate Mn(2+): D105 and D107. Y212 is a glycosylation site (O-linked (Glc...) tyrosine). 3 residues coordinate UDP: H229, G232, and K235. Mn(2+) is bound at residue H229. 2 residues coordinate UDP-alpha-D-glucose: G232 and K235. The tract at residues 283 to 303 is disordered; sequence RIEEDSHETEEKVDEEVSISE.

The protein belongs to the glycosyltransferase 8 family. Glycogenin subfamily. It depends on Mn(2+) as a cofactor.

It is found in the cytoplasm. Its subcellular location is the vacuole. The catalysed reaction is L-tyrosyl-[glycogenin] + UDP-alpha-D-glucose = alpha-D-glucosyl-L-tyrosyl-[glycogenin] + UDP + H(+). It catalyses the reaction [1,4-alpha-D-glucosyl](n)-L-tyrosyl-[glycogenin] + UDP-alpha-D-glucose = [1,4-alpha-D-glucosyl](n+1)-L-tyrosyl-[glycogenin] + UDP + H(+). Glycogenin participates in the glycogen biosynthetic process along with glycogen synthase and glycogen branching enzyme. It catalyzes the formation of a short alpha (1,4)-glucosyl chain covalently attached via a glucose 1-O-tyrosyl linkage to internal tyrosine residues and these chains act as primers for the elongation reaction catalyzed by glycogen synthase. The protein is Glycogenin of Komagataella phaffii (strain GS115 / ATCC 20864) (Yeast).